A 587-amino-acid polypeptide reads, in one-letter code: Protein NDNF (587 aa).

A signal peptide spans 1–24 (MQRSTMLPGVELLLLFLLSTSLHA). Residues asparagine 109, asparagine 129, asparagine 190, asparagine 321, asparagine 334, asparagine 459, asparagine 498, and asparagine 558 are each glycosylated (N-linked (GlcNAc...) asparagine).

As to quaternary structure, binds heparin. Interacts with dally; the interaction promotes dally degradation. Interacts with dpp and gbb.

Its subcellular location is the secreted. The protein resides in the extracellular space. It localises to the extracellular matrix. Its function is as follows. Secretory protein that acts as a feedback regulator of dpp/BMP, wg and hh signaling pathways. In the developing wing, is a dosage-dependent modulator of dpp/BMP signaling involved in wing growth and crossvein patterning; low levels promote and high levels inhibit dpp/BMP signaling. In the early pupal wing, inhibits dpp/BMP signaling activity to prevent the formation of ectopic crossveins in the posterior compartment. Binds to dpp and gbb to modulate their release and activity decreasing dpp/BMP signaling in the responding cells. During wing development regulates dpp/BMP coreceptor dally availability on the cell surface. Might have a role in testis development. The protein is Protein NDNF of Drosophila melanogaster (Fruit fly).